Consider the following 398-residue polypeptide: Acetyl-CoA acetyltransferase (398 aa).

Ser-2 is modified (N-acetylserine). The active-site Acyl-thioester intermediate is the Cys-91. CoA contacts are provided by Tyr-186 and Lys-231. Tyr-186 contributes to the K(+) binding site. The K(+) site is built by Ala-248, Ala-249, and Ala-251. Ser-252 contacts CoA. Val-350 provides a ligand contact to K(+). Active-site proton acceptor residues include His-354 and Cys-384.

It belongs to the thiolase-like superfamily. Thiolase family. In terms of assembly, homotetramer.

It is found in the cytoplasm. The protein resides in the cytosol. The enzyme catalyses 2 acetyl-CoA = acetoacetyl-CoA + CoA. The protein operates within metabolic intermediate biosynthesis; (R)-mevalonate biosynthesis; (R)-mevalonate from acetyl-CoA: step 1/3. Its function is as follows. Acetyl-CoA acetyltransferase; part of the first module of ergosterol biosynthesis pathway that includes the early steps of the pathway, conserved across all eukaryotes, and which results in the formation of mevalonate from acetyl-coenzyme A (acetyl-CoA). ERG10 catalyzes the formation of acetoacetyl-CoA from acetyl-CoA. The first module starts with the action of the cytosolic acetyl-CoA acetyltransferase ERG10 that catalyzes the formation of acetoacetyl-CoA. The hydroxymethylglutaryl-CoA synthase ERG13 then condenses acetyl-CoA with acetoacetyl-CoA to form HMG-CoA. The rate-limiting step of the early module is the reduction to mevalonate by the 3-hydroxy-3-methylglutaryl-coenzyme A (HMG-CoA) reductases HMG1 and HMG2 which are derived from a single ancestral HMGR gene by gene duplication. The chain is Acetyl-CoA acetyltransferase from Saccharomyces cerevisiae (strain ATCC 204508 / S288c) (Baker's yeast).